Consider the following 314-residue polypeptide: Inactive chitinase-like protein 1 (314 aa).

A signal peptide spans 1–19; sequence MKEIVRALEGYGPPKDKAA. In terms of domain architecture, Chitin-binding type-1 spans 20-60; the sequence is EQCGWQAGGALCPGGLCCSQYGWCANTPEYCGSGCQSQCDG. Intrachain disulfides connect Cys22-Cys37, Cys31-Cys43, Cys36-Cys50, Cys54-Cys58, Cys92-Cys154, Cys166-Cys174, and Cys273-Cys305.

Belongs to the glycosyl hydrolase 19 family. Chitinase class I subfamily.

Inactive chitinase-like protein that does not exhibit hydrolytic activity toward chitin. Binds strongly to chitin and possesses antifungal activity toward the fungal pathogen Altenaria alternata in plate assays. Inhibits the growth of Fusarium oxysporum on plate assays. Probably involved in defense against fungal pathogens through a mechanism that only involves carbohydrate binding. This is Inactive chitinase-like protein 1 from Hevea brasiliensis (Para rubber tree).